Consider the following 611-residue polypeptide: UPF0508 protein SCY_3114 (611 aa).

It belongs to the UPF0508 family.

The chain is UPF0508 protein SCY_3114 from Saccharomyces cerevisiae (strain YJM789) (Baker's yeast).